A 344-amino-acid chain; its full sequence is Follistatin (344 aa).

The signal sequence occupies residues 1 to 29 (MVRPRHQPGGLCLLLLLLCQFMEDRSAQA). Residues 30–103 (GNCWLRQAKN…TCDNVDCGPG (74 aa)) enclose the TB domain. Disulfide bonds link cysteine 32–cysteine 55, cysteine 42–cysteine 88, cysteine 56–cysteine 91, cysteine 95–cysteine 106, cysteine 100–cysteine 116, cysteine 118–cysteine 150, cysteine 122–cysteine 143, cysteine 132–cysteine 164, cysteine 168–cysteine 179, cysteine 173–cysteine 189, cysteine 192–cysteine 225, cysteine 196–cysteine 218, cysteine 207–cysteine 239, cysteine 245–cysteine 256, cysteine 250–cysteine 267, cysteine 270–cysteine 302, cysteine 274–cysteine 295, and cysteine 284–cysteine 316. The Follistatin-like 1 domain maps to 94–117 (TCDNVDCGPGKKCRMNKKNKPRCV). The 55-residue stretch at 112–166 (NKPRCVCAPDCSNITWKGPVCGLDGKTYRNECALLKARCKEQPELEVQYQGKCKK) folds into the Kazal-like 1 domain. Asparagine 124 is a glycosylation site (N-linked (GlcNAc...) asparagine). The Follistatin-like 2 domain maps to 167-190 (TCRDVNCPGSSTCVVDQTNNAYCV). The 56-residue stretch at 186-241 (NAYCVTCNRICPEPTSSEQYLCGNDGVTYSSACHLRKATCLLGRSIGLAYEGKCIK) folds into the Kazal-like 2 domain. Residues 244 to 268 (SCEDIQCTGGKKCLWDFKVGRGRCS) enclose the Follistatin-like 3 domain. Residues 264–318 (RGRCSLCDELCPDSKSEEPVCASDNATYASECAMKEAACSSGVLLEVKHSGSCNS) form the Kazal-like 3 domain. Asparagine 288 carries N-linked (GlcNAc...) asparagine glycosylation. A disordered region spans residues 314 to 344 (GSCNSISEDTEEEEEDEDQDYSFPISSILEW). Positions 321 to 333 (EDTEEEEEDEDQD) are enriched in acidic residues.

In terms of assembly, interacts with GDF11. Interacts with activin A/INHBA. Interacts with myostatin/MSTN.

Its subcellular location is the secreted. The protein localises to the nucleus. It is found in the nucleolus. In terms of biological role, multifunctional regulatory protein whose primary function is to antagonize members of the transforming growth factor beta (TGF-beta) superfamily including activin, myostatin, GDF11 or bone morphogenetic proteins (BMPs). Mechanistically, binds to these ligands in the extracellular space, blocking their type II receptor-binding site to inhibit downstream signaling. Plays an essential role in muscle fiber formation and growth both by preventing the repressive effects of myostatin and through SMAD3/AKT/mTOR signaling independently of myostatin. Also promotes neural differentiation by antagonizing the action BMP4. Acts as a specific inhibitor of the biosynthesis and secretion of pituitary follicle stimulating hormone (FSH) by sequestering activin A/INHBA. On the other hand, translocates into the nucleus where it down-regulates rRNA synthesis and ribosome biogenesis to maintain cellular energy homeostasis by binding to rDNA. The chain is Follistatin from Equus caballus (Horse).